We begin with the raw amino-acid sequence, 130 residues long: Small ribosomal subunit protein uS8 (130 aa).

The protein belongs to the universal ribosomal protein uS8 family. As to quaternary structure, part of the 30S ribosomal subunit.

In terms of biological role, one of the primary rRNA binding proteins, it binds directly to 16S rRNA central domain where it helps coordinate assembly of the platform of the 30S subunit. The protein is Small ribosomal subunit protein uS8 of Thermococcus onnurineus (strain NA1).